The sequence spans 426 residues: Enolase (426 aa).

Glutamine 162 lines the (2R)-2-phosphoglycerate pocket. The active-site Proton donor is the glutamate 204. Mg(2+)-binding residues include aspartate 241, glutamate 284, and aspartate 311. Lysine 336, arginine 365, serine 366, and lysine 387 together coordinate (2R)-2-phosphoglycerate. The active-site Proton acceptor is the lysine 336.

This sequence belongs to the enolase family. In terms of assembly, component of the RNA degradosome, a multiprotein complex involved in RNA processing and mRNA degradation. Mg(2+) is required as a cofactor.

It localises to the cytoplasm. Its subcellular location is the secreted. The protein localises to the cell surface. It catalyses the reaction (2R)-2-phosphoglycerate = phosphoenolpyruvate + H2O. It participates in carbohydrate degradation; glycolysis; pyruvate from D-glyceraldehyde 3-phosphate: step 4/5. Its function is as follows. Catalyzes the reversible conversion of 2-phosphoglycerate (2-PG) into phosphoenolpyruvate (PEP). It is essential for the degradation of carbohydrates via glycolysis. The sequence is that of Enolase from Hydrogenovibrio crunogenus (strain DSM 25203 / XCL-2) (Thiomicrospira crunogena).